The following is a 264-amino-acid chain: Thymidylate synthase (264 aa).

Arg-21 is a binding site for dUMP. Residue His-51 coordinates (6R)-5,10-methylene-5,6,7,8-tetrahydrofolate. Arg-126–Arg-127 lines the dUMP pocket. The Nucleophile role is filled by Cys-146. DUMP is bound by residues Arg-166–Asp-169, Asn-177, and His-207–Tyr-209. (6R)-5,10-methylene-5,6,7,8-tetrahydrofolate is bound at residue Asp-169. Position 263 (Ser-263) interacts with (6R)-5,10-methylene-5,6,7,8-tetrahydrofolate.

Belongs to the thymidylate synthase family. Bacterial-type ThyA subfamily. As to quaternary structure, homodimer.

The protein resides in the cytoplasm. The catalysed reaction is dUMP + (6R)-5,10-methylene-5,6,7,8-tetrahydrofolate = 7,8-dihydrofolate + dTMP. Its pathway is pyrimidine metabolism; dTTP biosynthesis. In terms of biological role, catalyzes the reductive methylation of 2'-deoxyuridine-5'-monophosphate (dUMP) to 2'-deoxythymidine-5'-monophosphate (dTMP) while utilizing 5,10-methylenetetrahydrofolate (mTHF) as the methyl donor and reductant in the reaction, yielding dihydrofolate (DHF) as a by-product. This enzymatic reaction provides an intracellular de novo source of dTMP, an essential precursor for DNA biosynthesis. This is Thymidylate synthase from Buchnera aphidicola subsp. Schizaphis graminum (strain Sg).